A 48-amino-acid chain; its full sequence is Cuticle protein 10 (48 aa).

The protein is Cuticle protein 10 of Limulus polyphemus (Atlantic horseshoe crab).